Here is a 61-residue protein sequence, read N- to C-terminus: Metallothionein-2 (61 aa).

Met-1 is modified (N-acetylmethionine). The interval 1-29 (MDPNCSCTAGESCTCAGSCKCKDCKCASC) is beta. Residues Cys-5, Cys-7, Cys-13, Cys-15, Cys-19, Cys-21, Cys-24, Cys-26, Cys-29, Cys-33, Cys-34, Cys-36, Cys-37, Cys-41, Cys-44, Cys-48, Cys-50, and Cys-57 each contribute to the a divalent metal cation site. The tract at residues 30–61 (KKSCCSCCPVGCAKCAQGCVCKGASDKCSCCA) is alpha. Ser-58 bears the Phosphoserine mark. The a divalent metal cation site is built by Cys-59 and Cys-60.

The protein belongs to the metallothionein superfamily. Type 1 family. Interacts with EOLA1.

Functionally, metallothioneins have a high content of cysteine residues that bind various heavy metals; these proteins are transcriptionally regulated by both heavy metals and glucocorticoids. The protein is Metallothionein-2 (MT2A) of Ovis aries (Sheep).